A 148-amino-acid polypeptide reads, in one-letter code: Endothelial differentiation-related factor 1 (148 aa).

Ala2 is modified (N-acetylalanine). Ser4 carries the post-translational modification Phosphoserine. Lys25 is subject to N6-methyllysine. Residues 33–42 (RRGEDVETSK) are compositionally biased toward basic and acidic residues. The segment at 33 to 66 (RRGEDVETSKKWAAGQNKQHSITKNTAKLDRETE) is disordered. Positions 37-113 (DVETSKKWAA…QVIADYESGR (77 aa)) are interaction with NR5A2, PPARG and NR1H3. A compositionally biased stretch (polar residues) spans 48–58 (QNKQHSITKNT). The segment at 69–108 (HHDRVTLEVGKVIQQGRQSKGLTQKDLATKINEKPQVIAD) is interaction with TBP and NR5A1. The IQ motif motif lies at 81 to 88 (IQQGRQSK). Residues 81–135 (IQQGRQSKGLTQKDLATKINEKPQVIADYESGRAIPNNQVLGKIERAIGLKLRGK) form the HTH cro/C1-type domain. A DNA-binding region (H-T-H motif) is located at residues 92–111 (QKDLATKINEKPQVIADYES).

Interacts with TBP and the transcription factor IID (TFIID) complex, NR5A2, NR1H3 and PPARG. Interaction with TBP is regulated by phosphorylation. Binds NR5A1, ATF1, FOS and JUN via their conserved basic region. Binding to calmodulin is regulated by calcium and phosphorylation of the IQ motif. Phosphorylated (by PKA and PKC). In terms of tissue distribution, expressed in brain, liver, lung, kidney and heart (at protein level). Ubiquitously expressed. More abundant in heart, pancreas, liver, intestine and adipose tissues.

It is found in the cytoplasm. Its subcellular location is the nucleus. Transcriptional coactivator stimulating NR5A1 and ligand-dependent NR1H3/LXRA and PPARG transcriptional activities. Enhances the DNA-binding activity of ATF1, ATF2, CREB1 and NR5A1. Regulates nitric oxid synthase activity probably by sequestering calmodulin in the cytoplasm. May function in endothelial cells differentiation, hormone-induced cardiomyocytes hypertrophy and lipid metabolism. This is Endothelial differentiation-related factor 1 (EDF1) from Homo sapiens (Human).